Consider the following 111-residue polypeptide: Cyclin-dependent protein kinase inhibitor SMR2 (111 aa).

The segment at 1 to 66 (MSKLLETLEE…PPPRKRPREI (66 aa)) is disordered. The segment covering 10–35 (EEKTVEQKPRSQEEEDHQDSSKKEEL) has biased composition (basic and acidic residues).

Interacts with CYCD2-1. Interacts with CDKB1-1. As to expression, expressed at low levels in roots and stems. Expressed in the root vascular tissue.

Its subcellular location is the nucleus. Functionally, cyclin-dependent protein kinase (CDK) inhibitor that restricts cell proliferation and cooperates with SIM and SMR1 to promote endoreplication during leaf development. This Arabidopsis thaliana (Mouse-ear cress) protein is Cyclin-dependent protein kinase inhibitor SMR2.